Reading from the N-terminus, the 263-residue chain is ATP synthase subunit b 2 (263 aa).

A helical transmembrane segment spans residues 2 to 22; sequence LIDPLTVVAQIINFLILVALL.

It belongs to the ATPase B chain family. F-type ATPases have 2 components, F(1) - the catalytic core - and F(0) - the membrane proton channel. F(1) has five subunits: alpha(3), beta(3), gamma(1), delta(1), epsilon(1). F(0) has four main subunits: a(1), b(1), b'(1) and c(10-14). The alpha and beta chains form an alternating ring which encloses part of the gamma chain. F(1) is attached to F(0) by a central stalk formed by the gamma and epsilon chains, while a peripheral stalk is formed by the delta, b and b' chains.

It localises to the cellular thylakoid membrane. F(1)F(0) ATP synthase produces ATP from ADP in the presence of a proton or sodium gradient. F-type ATPases consist of two structural domains, F(1) containing the extramembraneous catalytic core and F(0) containing the membrane proton channel, linked together by a central stalk and a peripheral stalk. During catalysis, ATP synthesis in the catalytic domain of F(1) is coupled via a rotary mechanism of the central stalk subunits to proton translocation. Its function is as follows. Component of the F(0) channel, it forms part of the peripheral stalk, linking F(1) to F(0). The polypeptide is ATP synthase subunit b 2 (Acaryochloris marina (strain MBIC 11017)).